A 363-amino-acid chain; its full sequence is MASYPKKKCGVLGATGSVGQRFILLLADHPFLELHAIGASNRSAGKKYKDAVRWKQTTAMSERLSNLVLRDCRADQFSDCDLVFSGLNSDVAGEIEMEFIKAEIPVFSNAKNYRKHPLVPLVVPTVNPQHLDLIPHQRKEFGLKKGFLVCNSNCAVIGVVIPFAALQAKFGPVEEVEVFTEQAVSGAGYPGVPSMDIMDNVIPYISGEEDKLENEAQKILGSLNADATAFDEQKGLTVGATCTRVGVTDGHMAFVSLRFKNRPGPSAEEVKQAMREYQSEAQKLGCPSAPREAIKVFDEPDRPQPRLDRDISKGYTVSVGRVREAAPGSYFDLRFAALSHNTVIGAAGSSILNAEVAVIKGYI.

Residues T15, G16, S17, V18, S40, S43, and L87 each coordinate NADP(+). C154 acts as the Acyl-thioester intermediate in catalysis. G186 contacts NADP(+). H251 functions as the Proton acceptor in the catalytic mechanism. NADP(+) is bound at residue N341.

This sequence belongs to the aspartate-semialdehyde dehydrogenase family. Homotetramer; dimer of dimers.

It localises to the cytoplasm. The protein resides in the cytosol. Its subcellular location is the nucleus. It catalyses the reaction L-aspartate 4-semialdehyde + phosphate + NADP(+) = 4-phospho-L-aspartate + NADPH + H(+). The protein operates within amino-acid biosynthesis; L-methionine biosynthesis via de novo pathway; L-homoserine from L-aspartate: step 2/3. It functions in the pathway amino-acid biosynthesis; L-threonine biosynthesis; L-threonine from L-aspartate: step 2/5. Its activity is regulated as follows. Inhibited by 4-amino-3-hydroxynaphthalene-1-sulfonic acid and the competitive inhibitor 1,4-benzoquinone and derivates such as 2-chloro-3-methoxy-1,4-naphthoquinone, 2,3-dichloro-1,4-naphthoquinone, 2-chloro-1,4-naphthoquinone, 2-bromo-1,4-naphthoquinone and 2,3-dichloro-5,8-dihydroxy-1,4-naphthoquinone. Its function is as follows. Catalyzes the NADPH-dependent formation of L-aspartate 4-semialdehyde (L-ASA) by the reductive dephosphorylation of 4-phospho-L-aspartate. Mediates the second step in the biosynthesis of amino acids that derive from aspartate (the aspartate family of amino acids), including methioinine and threonine, the latter of which is a precursor to isoleucine. The polypeptide is Aspartate-semialdehyde dehydrogenase (Aspergillus fumigatus (strain ATCC MYA-4609 / CBS 101355 / FGSC A1100 / Af293) (Neosartorya fumigata)).